A 63-amino-acid chain; its full sequence is ATPase inhibitor, mitochondrial (63 aa).

Positions T1–A23 are disordered. A coiled-coil region spans residues E18–T62.

It belongs to the ATPase inhibitor family.

The protein localises to the mitochondrion. Functionally, this protein forms a one-to-one complex with ATPase to inhibit the enzyme activity completely. This is ATPase inhibitor, mitochondrial from Cyberlindnera jadinii (Torula yeast).